Reading from the N-terminus, the 283-residue chain is Orotidine 5'-phosphate decarboxylase (283 aa).

The active-site Proton donor is Lys97.

The protein belongs to the OMP decarboxylase family. Type 2 subfamily.

The catalysed reaction is orotidine 5'-phosphate + H(+) = UMP + CO2. It participates in pyrimidine metabolism; UMP biosynthesis via de novo pathway; UMP from orotate: step 2/2. The polypeptide is Orotidine 5'-phosphate decarboxylase (Clostridium botulinum (strain Kyoto / Type A2)).